The following is a 451-amino-acid chain: uncharacterized protein (451 aa).

One can recognise a TRAM domain in the interval 1–59 (MLKKNDIVEVEISDLSHDGAGIAKVDGLVFFVDNALPTEKIRMRVLKVKKNIAFGKVES). Gln-283, Tyr-312, Glu-333, and Asp-381 together coordinate S-adenosyl-L-methionine. Catalysis depends on Cys-408, which acts as the Nucleophile.

Belongs to the class I-like SAM-binding methyltransferase superfamily. RNA M5U methyltransferase family.

This is an uncharacterized protein from Streptococcus mutans serotype c (strain ATCC 700610 / UA159).